Consider the following 298-residue polypeptide: (S)-ureidoglycine aminohydrolase (298 aa).

Residues 1 to 20 (MRSLYLIVFIVISLVKASKS) form the signal peptide. The Cupin type-2 domain maps to 222-288 (TMDFQPGEFL…ALGKTRSRYL (67 aa)). Mn(2+)-binding residues include Glu-235, His-237, His-241, and Gln-275. Position 235 (Glu-235) interacts with substrate. The substrate site is built by Gln-275, Tyr-287, and Lys-291.

It belongs to the UGHY family. Homooctamer. It depends on Mn(2+) as a cofactor.

The protein resides in the endoplasmic reticulum. The enzyme catalyses (S)-2-ureidoglycine + H2O = (S)-ureidoglycolate + NH4(+). Involved in the catabolism of purine nucleotides. Can use (S)-2-ureidoglycine as substrate, but not allantoate. The sequential activity of AAH, UGLYAH and UAH allows a complete purine breakdown without the intermediate generation of urea. In Arabidopsis thaliana (Mouse-ear cress), this protein is (S)-ureidoglycine aminohydrolase (UGLYAH).